A 219-amino-acid chain; its full sequence is Probable GTP-binding protein EngB (219 aa).

The region spanning 24–207 is the EngB-type G domain; that stretch reads VQPEIAFAGR…HALIESWLRP (184 aa). GTP is bound by residues 32-39, 59-63, 81-84, 148-151, and 185-188; these read GRSNAGKS, GRTQH, DLPG, TKCD, and LFSA. The Mg(2+) site is built by serine 39 and threonine 61.

Belongs to the TRAFAC class TrmE-Era-EngA-EngB-Septin-like GTPase superfamily. EngB GTPase family. Mg(2+) is required as a cofactor.

In terms of biological role, necessary for normal cell division and for the maintenance of normal septation. The chain is Probable GTP-binding protein EngB from Burkholderia thailandensis (strain ATCC 700388 / DSM 13276 / CCUG 48851 / CIP 106301 / E264).